Reading from the N-terminus, the 155-residue chain is Large ribosomal subunit protein bL9c (155 aa).

It belongs to the bacterial ribosomal protein bL9 family.

It is found in the plastid. It localises to the chloroplast. Its function is as follows. Binds to the 23S rRNA. This chain is Large ribosomal subunit protein bL9c, found in Porphyra purpurea (Red seaweed).